The primary structure comprises 68 residues: Pantinin-3 (68 aa).

An N-terminal signal peptide occupies residues 1-23 (MKTQFAILLIALVLFQLLSQSDA). Leucine amide is present on L36. A propeptide spanning residues 40 to 68 (GLNELDNLDELFDGEISQADIDFLKELMS) is cleaved from the precursor.

This sequence belongs to the non-disulfide-bridged peptide (NDBP) superfamily. Short antimicrobial peptide (group 4) family. In terms of tissue distribution, expressed by the venom gland.

Its subcellular location is the secreted. It is found in the target cell membrane. In terms of biological role, amphipathic peptide that possesses relatively strong activities against Gram-positive bacteria and a fungus, but has very weak antimicrobial activities against Gram-negative bacteria. Also exhibits mild hemolytic activities against human erythrocytes (16 uM induce 70% of hemolysis). Furthermore, this peptide potently inhibits the growth of vancomycin-resistant Enterococcus (VRE) S13, a pathogen that can cause a number of human infections. Minimal inhibitory concentration (MIC) are the following: 16 uM against S.aureus, 6 uM against B.magaterium, 8 uM against M.luteus, 4 uM against VRE, 12 uM against methicillin-resistant S.aureus, 36 uM against E.coli, &gt;87 uM against P.putida, 87 uM against K.oxytoca, &gt;87 uM against E.cloacae, 84 uM against S.enterica and 17 uM against the fungus C.tropicalis. The protein is Pantinin-3 of Pandinus imperator (Emperor scorpion).